We begin with the raw amino-acid sequence, 282 residues long: Shikimate dehydrogenase (NADP(+)) (282 aa).

Shikimate is bound by residues serine 15 to serine 17 and threonine 62. Lysine 66 functions as the Proton acceptor in the catalytic mechanism. Shikimate-binding residues include asparagine 87 and aspartate 103. Residues glycine 127–alanine 131, asparagine 151–lysine 156, and methionine 220 contribute to the NADP(+) site. Tyrosine 222 contacts shikimate. Glycine 244 serves as a coordination point for NADP(+).

It belongs to the shikimate dehydrogenase family. In terms of assembly, homodimer.

The enzyme catalyses shikimate + NADP(+) = 3-dehydroshikimate + NADPH + H(+). The protein operates within metabolic intermediate biosynthesis; chorismate biosynthesis; chorismate from D-erythrose 4-phosphate and phosphoenolpyruvate: step 4/7. In terms of biological role, involved in the biosynthesis of the chorismate, which leads to the biosynthesis of aromatic amino acids. Catalyzes the reversible NADPH linked reduction of 3-dehydroshikimate (DHSA) to yield shikimate (SA). The polypeptide is Shikimate dehydrogenase (NADP(+)) (Shewanella baltica (strain OS155 / ATCC BAA-1091)).